Consider the following 165-residue polypeptide: Histone H1 (165 aa).

Residues glycine 1 to asparagine 165 are disordered. Residues valine 9 to lysine 18 are compositionally biased toward basic and acidic residues. Over residues valine 20–lysine 31 the composition is skewed to basic residues. Low complexity predominate over residues lysine 32 to lysine 41. 2 positions are modified to phosphothreonine: threonine 48 and threonine 54. The segment covering threonine 68–leucine 89 has biased composition (basic and acidic residues). Serine 83 bears the Phosphoserine mark. Over residues lysine 103–threonine 117 the composition is skewed to basic residues. The residue at position 117 (threonine 117) is a Phosphothreonine. Positions alanine 118 to lysine 157 are enriched in basic and acidic residues.

Cell-growth/division-associated phosphorylation by a CDC2-like kinase. Is additionally phosphorylated on either Ser-33, Thr-34 or Thr-35, and on either Thr-39 or Ser-40.

The protein resides in the nucleus. Its subcellular location is the chromosome. Functionally, histones H1 are necessary for the condensation of nucleosome chains into higher-order structures. The chain is Histone H1 (HHO) from Tetrahymena pyriformis.